The following is a 529-amino-acid chain: Potassium voltage-gated channel subfamily A member 6 (529 aa).

The segment at 1 to 33 (MRSEKSLTLAAPGEVRGPEGEQQDAGDFPEAGG) is disordered. The Cytoplasmic segment spans residues 1–171 (MRSEKSLTLA…LLFEYPESSG (171 aa)). Serine 3 carries the phosphoserine modification. Residues 172-193 (PARGIAIVSVLVILISIVIFCL) traverse the membrane as a helical segment. Residues 194 to 262 (ETLPQFRVDG…TLGGSFFTDP (69 aa)) are Extracellular-facing. Residues 210–220 (GVSRVSPVSRG) show a composition bias toward low complexity. A disordered region spans residues 210–233 (GVSRVSPVSRGSQEEEEDEDDSYT). A helical transmembrane segment spans residues 263-284 (FFLVETLCIVWFTFELLVRFSA). Cysteine 285 carries S-palmitoyl cysteine lipidation. The Cytoplasmic segment spans residues 285 to 295 (CPSKPAFFRNI). Residues 296-316 (MNIIDLVAIFPYFITLGTELV) form a helical membrane-spanning segment. Topologically, residues 317–337 (QQQEQQPASGGGGQNGQQAMS) are extracellular. The chain crosses the membrane as a helical; Voltage-sensor span at residues 338–358 (LAILRVIRLVRVFRIFKLSRH). Residues 359–373 (SKGLQILGKTLQASM) lie on the Cytoplasmic side of the membrane. The tract at residues 360-373 (KGLQILGKTLQASM) is S4-S5 linker. Residues 374 to 395 (RELGLLIFFLFIGVILFSSAVY) traverse the membrane as a helical segment. The Extracellular portion of the chain corresponds to 396–409 (FAEADDDDSLFPSI). An intramembrane region (helical) is located at residues 410–421 (PDAFWWAVVTMT). The short motif at 422–427 (TVGYGD) is the Selectivity filter element. An intramembrane segment occupies 422–429 (TVGYGDMY). The Extracellular segment spans residues 430–436 (PMTVGGK). A helical transmembrane segment spans residues 437–465 (IVGSLCAIAGVLTIALPVPVIVSNFNYFY). Residues 466-529 (HRETEQEEQG…YAEKRMLTEV (64 aa)) are Cytoplasmic-facing. Residues 488-513 (DLRATDNGLGKPDFPEANRERRPSYL) are disordered. Residues 500–510 (DFPEANRERRP) show a composition bias toward basic and acidic residues. Serine 511 is subject to Phosphoserine; by PKA. Residues 527 to 529 (TEV) carry the PDZ-binding motif.

Belongs to the potassium channel family. A (Shaker) (TC 1.A.1.2) subfamily. Kv1.6/KCNA6 sub-subfamily. As to quaternary structure, homotetramer and heterotetramer of potassium channel proteins. Interacts with KCNAB1 and KCNAB2.

It is found in the cell membrane. It catalyses the reaction K(+)(in) = K(+)(out). Functionally, voltage-gated potassium channel that mediates transmembrane potassium transport in excitable membranes. Forms tetrameric potassium-selective channels through which potassium ions pass in accordance with their electrochemical gradient. The channel alternates between opened and closed conformations in response to the voltage difference across the membrane. Can form functional homotetrameric channels and heterotetrameric channels that contain variable proportions of KCNA1, KCNA2, KCNA4, KCNA6, and possibly other family members as well; channel properties depend on the type of alpha subunits that are part of the channel. Channel properties are modulated by cytoplasmic beta subunits that regulate the subcellular location of the alpha subunits and promote rapid inactivation. Homotetrameric channels display rapid activation and slow inactivation. This Homo sapiens (Human) protein is Potassium voltage-gated channel subfamily A member 6 (KCNA6).